The sequence spans 334 residues: D-aspartate oxidase 1 (334 aa).

Residues D35, R36, S43, G307, and T312 each coordinate FAD. A Microbody targeting signal motif is present at residues 332-334 (SKL).

It belongs to the DAMOX/DASOX family. FAD is required as a cofactor. In terms of tissue distribution, expressed in the intestinal cells, hypodermis and in unidentified cells in the head in adult hermaphrodites.

It is found in the peroxisome matrix. The enzyme catalyses D-aspartate + O2 + H2O = oxaloacetate + H2O2 + NH4(+). It carries out the reaction D-glutamate + O2 + H2O = H2O2 + 2-oxoglutarate + NH4(+). With respect to regulation, not inhibited by potassium bromide or thiolactomycin. In terms of biological role, selectively catalyzes the oxidative deamination of acidic amino acids. May play a role in the egg-laying events and early development of the worm, in addition to quality control of the germ cells. The polypeptide is D-aspartate oxidase 1 (ddo-1) (Caenorhabditis elegans).